The chain runs to 214 residues: Pyridoxine/pyridoxamine 5'-phosphate oxidase (214 aa).

Residues 8–11 (RTNY) and Lys66 contribute to the substrate site. FMN contacts are provided by residues 61–66 (RIVLIK), 76–77 (FT), Arg82, Lys83, and Gln105. Residues Tyr123, Arg127, and Ser131 each contribute to the substrate site. Residues 140–141 (QS) and Trp184 contribute to the FMN site. 190-192 (RLH) is a substrate binding site. Arg194 serves as a coordination point for FMN.

This sequence belongs to the pyridoxamine 5'-phosphate oxidase family. Homodimer. It depends on FMN as a cofactor.

It carries out the reaction pyridoxamine 5'-phosphate + O2 + H2O = pyridoxal 5'-phosphate + H2O2 + NH4(+). The enzyme catalyses pyridoxine 5'-phosphate + O2 = pyridoxal 5'-phosphate + H2O2. The protein operates within cofactor metabolism; pyridoxal 5'-phosphate salvage; pyridoxal 5'-phosphate from pyridoxamine 5'-phosphate: step 1/1. It participates in cofactor metabolism; pyridoxal 5'-phosphate salvage; pyridoxal 5'-phosphate from pyridoxine 5'-phosphate: step 1/1. Functionally, catalyzes the oxidation of either pyridoxine 5'-phosphate (PNP) or pyridoxamine 5'-phosphate (PMP) into pyridoxal 5'-phosphate (PLP). The protein is Pyridoxine/pyridoxamine 5'-phosphate oxidase of Burkholderia thailandensis (strain ATCC 700388 / DSM 13276 / CCUG 48851 / CIP 106301 / E264).